We begin with the raw amino-acid sequence, 338 residues long: 1-aminocyclopropane-1-carboxylate deaminase (338 aa).

K51 is subject to N6-(pyridoxal phosphate)lysine. S78 serves as the catalytic Nucleophile.

It belongs to the ACC deaminase/D-cysteine desulfhydrase family. As to quaternary structure, homotrimer. Requires pyridoxal 5'-phosphate as cofactor.

The catalysed reaction is 1-aminocyclopropane-1-carboxylate + H2O = 2-oxobutanoate + NH4(+). Catalyzes a cyclopropane ring-opening reaction, the irreversible conversion of 1-aminocyclopropane-1-carboxylate (ACC) to ammonia and alpha-ketobutyrate. Allows growth on ACC as a nitrogen source. The sequence is that of 1-aminocyclopropane-1-carboxylate deaminase from Pseudomonas sp. (strain ACP).